An 86-amino-acid polypeptide reads, in one-letter code: U13-theraphotoxin-Cg1b (86 aa).

A signal peptide spans 1-21 (MKVSVLITLAVLGVMFVWASA). A propeptide spanning residues 22 to 51 (AELEQSGSDQKDSPAWLKSMERIFQSEERE) is cleaved from the precursor. 3 cysteine pairs are disulfide-bonded: Cys52-Cys66, Cys59-Cys71, and Cys65-Cys78.

This sequence belongs to the neurotoxin 10 (Hwtx-1) family. 41 (Jztx-36) subfamily. Expressed by the venom gland.

Its subcellular location is the secreted. Probable ion channel inhibitor. The chain is U13-theraphotoxin-Cg1b from Chilobrachys guangxiensis (Chinese earth tiger tarantula).